Here is a 520-residue protein sequence, read N- to C-terminus: Calcium and calcium/calmodulin-dependent serine/threonine-protein kinase (520 aa).

The region spanning 13–302 is the Protein kinase domain; sequence YEVVDVLGKG…ANDLLKHPWV (290 aa). Residues 19 to 27 and K44 each bind ATP; that span reads LGKGGFSVV. Residue D167 is the Proton acceptor of the active site. A helical transmembrane segment spans residues 227-243; sequence MWSLGVILYILLSGCPP. T267 is modified (phosphothreonine; by autocatalysis). A calmodulin-binding region spans residues 325–338; sequence ARRKLRAAAIASVL. Residues 346 to 368 are a coiled coil; sequence TKKLKNLLGSHDMKSEELENLRA. EF-hand domains are found at residues 361 to 395, 396 to 431, 432 to 467, and 474 to 509; these read EELENLRAHFKRICANGDNATLPEFEEVLKAMKMN, SLIPLAPRVFDLFDNNRDGTIDMREILCGLSNLRNS, QGDDALQLCFQMYDADRSGCISKEELASMLRALPED, and TEPGKLDEIFDQMDANSDGVVTFDEFKAAMQRDSSL. Residues D409, N411, D413, T415, E420, D445, D447, S449, C451, E456, D487, N489, D491, and E498 each contribute to the Ca(2+) site.

This sequence belongs to the protein kinase superfamily. CAMK Ser/Thr protein kinase family. CaMK subfamily. In terms of processing, autophosphorylation stimulated by calcium and inhibited by calcium/calmodulin. Occurs probably by an intermolecular mechanism.

The protein resides in the membrane. The enzyme catalyses L-seryl-[protein] + ATP = O-phospho-L-seryl-[protein] + ADP + H(+). It catalyses the reaction L-threonyl-[protein] + ATP = O-phospho-L-threonyl-[protein] + ADP + H(+). Its activity is regulated as follows. Activated by calcium/calmodulin binding after calcium-induced autophosphorylation. Autophosphorylation is associated with a time-dependent loss of kinase activity sensitive to reaction pH and ATP concentration. In vitro inactivation leads to the formation of network-like structures. Functionally, protein kinase that may be involved in microsporogenesis. The polypeptide is Calcium and calcium/calmodulin-dependent serine/threonine-protein kinase (CCAMK) (Lilium longiflorum (Trumpet lily)).